We begin with the raw amino-acid sequence, 240 residues long: MFGTFLQNQSVRLNMVCAPWLLAVVVVCVCNPGVEGQCWDSSHCKDLPSEDKILECIHLFRSGLQDESPEPRSAAQQSTEESLSLGILLAALTSGERALDADPEPHSDKRHSYSMEHFRWGKPIGHKRRPIKVYASSLEGGDSSEGTFPLQARRQLSSWEDEMVGALGNQGAKAQTKVVPRTLTVTGLQDKKDGSYRMGHFRWGSPTAIKRYGGFMKPYTQQSHKPLITLLKHVTLKNEQ.

The signal sequence occupies residues 1 to 36 (MFGTFLQNQSVRLNMVCAPWLLAVVVVCVCNPGVEG). Position 37 is a pyrrolidone carboxylic acid (Gln-37). Residue His-111 is a propeptide. Ser-112 is modified (N-acetylserine; in Corticotropin). Ile-124 carries the post-translational modification Isoleucine amide.

Belongs to the POMC family. Specific enzymatic cleavages at paired basic residues yield the different active peptides. In terms of processing, acetylation of beta-endorphin occurs in a tissue-specific manner. Pituitary and hypothalamus of adult diploid animals.

Its subcellular location is the secreted. In terms of biological role, stimulates the adrenal glands to release cortisol. Melanocyte-stimulating hormone alpha: Anorexigenic peptide. Increases the pigmentation of skin by increasing melanin production in melanocytes. Its function is as follows. Melanocyte-stimulating hormone beta: Increases the pigmentation of skin by increasing melanin production in melanocytes. Functionally, beta-endorphin: Endogenous orexigenic opiate. In terms of biological role, endogenous opiate. The polypeptide is Pro-opiomelanocortin B (pomcb) (Oncorhynchus mykiss (Rainbow trout)).